Here is a 110-residue protein sequence, read N- to C-terminus: Small ribosomal subunit protein bS16 (110 aa).

Residues 84-110 (KREARNNPEKAVPRKERKAAAEAAAKK) form a disordered region.

It belongs to the bacterial ribosomal protein bS16 family.

The polypeptide is Small ribosomal subunit protein bS16 (Rhodopseudomonas palustris (strain BisB18)).